The sequence spans 498 residues: MKKRTNSRGTPTSSGDALLDTSFSSAGDAERDHPAYKSGAASAPATPTKRRDGSDGSVSSAGARRKRKDEIAQTFVIVNERPVDDISLDFFYKPHTITLLAVSVLAVMYFAFVRNEANVDENLWAGLLCIVFFFLIVSVIAFPNGPFTRPHPAVWRILFGCSVLYLLTLQFLMFQNYPTIRSIFYWIDPKLKNFHIDMEKEYGVNCSDISWDRVKGHLDVFAWGHFLGWAFKAILIRHMGILWAISVMWEITEITFAHLLPNFIECWWDALILDVIICNGLGIWMGLKICQILEMREYKWASIKDISTTTGKIKRAMLQFTPESWSAIRWLDPKSTAMRFAAVIQLVIFWQVTELNTFFLKHIFEMPPDHFIVIGRLIFIGLFVAPSVRQYYVYVTDTRCKRVGTQCWVYGAIMVSEAILCIKNGKELFERTQAINIVLWLTVQVIISVAFVYLAVYWQQRQLKKVSSTPAKTKETIPASSSSPSKGKLSPQKEKKLK.

The segment at 1–65 is disordered; sequence MKKRTNSRGT…GSVSSAGARR (65 aa). Topologically, residues 1–92 are cytoplasmic; the sequence is MKKRTNSRGT…VDDISLDFFY (92 aa). The segment covering 7–25 has biased composition (polar residues); that stretch reads SRGTPTSSGDALLDTSFSS. A helical transmembrane segment spans residues 93-113; the sequence is KPHTITLLAVSVLAVMYFAFV. Residues 114 to 122 lie on the Lumenal side of the membrane; the sequence is RNEANVDEN. A helical membrane pass occupies residues 123-143; the sequence is LWAGLLCIVFFFLIVSVIAFP. The Cytoplasmic portion of the chain corresponds to 144–153; it reads NGPFTRPHPA. Residues 154-174 form a helical membrane-spanning segment; it reads VWRILFGCSVLYLLTLQFLMF. The Lumenal portion of the chain corresponds to 175–239; the sequence is QNYPTIRSIF…AFKAILIRHM (65 aa). N-linked (GlcNAc...) asparagine glycosylation occurs at Asn-205. A helical membrane pass occupies residues 240 to 260; sequence GILWAISVMWEITEITFAHLL. Residues 261–266 are Cytoplasmic-facing; that stretch reads PNFIEC. A helical transmembrane segment spans residues 267 to 287; the sequence is WWDALILDVIICNGLGIWMGL. The Lumenal segment spans residues 288–339; the sequence is KICQILEMREYKWASIKDISTTTGKIKRAMLQFTPESWSAIRWLDPKSTAMR. Residues 340 to 360 form a helical membrane-spanning segment; it reads FAAVIQLVIFWQVTELNTFFL. Residues 361 to 367 are Cytoplasmic-facing; that stretch reads KHIFEMP. A helical transmembrane segment spans residues 368–388; sequence PDHFIVIGRLIFIGLFVAPSV. Residues 389–402 lie on the Lumenal side of the membrane; that stretch reads RQYYVYVTDTRCKR. Residues 403–423 form a helical membrane-spanning segment; the sequence is VGTQCWVYGAIMVSEAILCIK. At 424-436 the chain is on the cytoplasmic side; it reads NGKELFERTQAIN. A helical membrane pass occupies residues 437 to 457; the sequence is IVLWLTVQVIISVAFVYLAVY. Residues 458 to 498 are Lumenal-facing; that stretch reads WQQRQLKKVSSTPAKTKETIPASSSSPSKGKLSPQKEKKLK. The segment at 465–498 is disordered; it reads KVSSTPAKTKETIPASSSSPSKGKLSPQKEKKLK. Low complexity predominate over residues 478-490; it reads PASSSSPSKGKLS.

This sequence belongs to the phosphatidyl serine synthase family.

The protein localises to the endoplasmic reticulum membrane. It carries out the reaction a 1,2-diacyl-sn-glycero-3-phosphoethanolamine + L-serine = a 1,2-diacyl-sn-glycero-3-phospho-L-serine + ethanolamine. The protein operates within phospholipid metabolism; phosphatidylserine biosynthesis. In terms of biological role, catalyzes a base-exchange reaction in which the polar head group of phosphatidylethanolamine (PE) is replaced by L-serine. This chain is Phosphatidylserine synthase, found in Drosophila melanogaster (Fruit fly).